Consider the following 127-residue polypeptide: CKVAHTYIHRRQTTDRFSSLHRPPDPDRWLLLPCCSEEARGPPPSPAPLPARLFPGRASSPLARTPSAGAASACKPLLERLPTPSRRRRRRRATRRARSRMPRTTPWRAPRAPARAWWTRPRMARAR.

Residues 39–127 (ARGPPPSPAP…WTRPRMARAR (89 aa)) form a disordered region. A compositionally biased stretch (basic residues) spans 85 to 101 (SRRRRRRRATRRARSRM). The segment covering 102–121 (PRTTPWRAPRAPARAWWTRP) has biased composition (low complexity).

The sequence is that of Cold-regulated protein 1 from Hordeum vulgare (Barley).